A 137-amino-acid polypeptide reads, in one-letter code: MAEATQKVSIVTPERVIYGDEARFVHVRGTDGDLGFLPGHTPLISSLRPGLLRIQKEGQWSTFVVAGGFVEVRDSRVVVLANAAERPEEIDLARAEKAKERAEKRLAAKDPEIDVVRAKAALARAVARIEAAGQIKR.

The protein belongs to the ATPase epsilon chain family. As to quaternary structure, F-type ATPases have 2 components, CF(1) - the catalytic core - and CF(0) - the membrane proton channel. CF(1) has five subunits: alpha(3), beta(3), gamma(1), delta(1), epsilon(1). CF(0) has three main subunits: a, b and c.

The protein resides in the cell membrane. Functionally, produces ATP from ADP in the presence of a proton gradient across the membrane. The chain is ATP synthase epsilon chain from Desulforudis audaxviator (strain MP104C).